The sequence spans 703 residues: Hyperosmolality-gated Ca2+ permeable channel 2.3 (703 aa).

The Extracellular segment spans residues 1 to 3 (MLL). The helical transmembrane segment at 4–26 (SALLTSVGINLGLCFLFFTLYSI) threads the bilayer. The Cytoplasmic portion of the chain corresponds to 27-81 (LRKQPSNVTVYGPRLVKKDGKSQQSNEFNLERLLPTAGWVKRALEPTNDEILSNL). A helical transmembrane segment spans residues 82–115 (GLDALVFIRVFVFSIRVFSFASVVGIFILLPVNY). Residues 116-143 (MGTEFEEFFDLPKKSMDNFSISNVNDGS) are Extracellular-facing. Residues 144-165 (NKLWIHFCAIYIFTAVVCSLLY) traverse the membrane as a helical segment. At 166–355 (YEHKYILTKR…TASFVRRWIS (190 aa)) the chain is on the cytoplasmic side. Residues 228–300 (RTDKLKVLMN…LKQSLLAGEE (73 aa)) are a coiled coil. Residues 356 to 382 (NVVVLVAFVALLILYIVPVVLVQGLAN) form a helical membrane-spanning segment. The Extracellular portion of the chain corresponds to 383-410 (LHQLETWFPFLKGILNMKIVSQVITGYL). Residues 411–432 (PSLIFQLFLLIVPPIMLLLSSM) form a helical membrane-spanning segment. The Cytoplasmic segment spans residues 433–436 (QGFI). The chain crosses the membrane as a helical span at residues 437 to 463 (SHSQIEKSACIKLLIFTVWNSFFANVL). Residues 464-489 (SGSALYRVNVFLEPKTIPRVLAAAVP) are Extracellular-facing. The helical transmembrane segment at 490 to 512 (AQASFFVSYVVTSGWTGLSSEIL) threads the bilayer. At 513–540 (RLVPLLWSFITKLFGKEDDKEFEVPSTP) the chain is on the cytoplasmic side. The helical transmembrane segment at 541–561 (FCQEIPRILFFGLLGITYFFL) threads the bilayer. Ser-562 is a topological domain (extracellular). Residues 563 to 586 (PLILPFLLVYYCLGYIIYRNQLLN) traverse the membrane as a helical segment. Topologically, residues 587 to 598 (VYAAKYETGGKF) are cytoplasmic. Residues 599 to 623 (WPIVHSYTIFSLVLMHIIAVGLFGL) form a helical membrane-spanning segment. Over 624–626 (KEL) the chain is Extracellular. Residues 627 to 655 (PVASSLTIPLPVLTVLFSIYCQRRFLPNF) traverse the membrane as a helical segment. The Cytoplasmic segment spans residues 656–703 (KSYPTQCLVNKDKADEREQNMSEFYSELVVAYRDPALSASQDSRDISP).

The protein belongs to the CSC1 (TC 1.A.17) family. As to quaternary structure, homodimer.

Its subcellular location is the membrane. Functionally, acts as an osmosensitive calcium-permeable cation channel. This chain is Hyperosmolality-gated Ca2+ permeable channel 2.3, found in Arabidopsis thaliana (Mouse-ear cress).